Here is a 673-residue protein sequence, read N- to C-terminus: Annexin A6 (673 aa).

Ala-2 is modified (N-acetylalanine). Ser-13 bears the Phosphoserine mark. Annexin repeat units follow at residues 20–91 (FNPS…GLMR), 92–163 (PPAY…VLLQ), 175–247 (DLVQ…AVVK), 251–322 (STAE…KLCG), 363–434 (FNPD…GLMM), 435–506 (PPAH…SLAT), 521–595 (EDAQ…AIVQ), and 599–670 (NKPL…AICG). Residue Tyr-30 is modified to Phosphotyrosine. Lys-63, Lys-68, Lys-75, and Lys-81 each carry N6-acetyllysine. Tyr-201 bears the Phosphotyrosine mark. N6-acetyllysine is present on residues Lys-306, Lys-370, and Lys-418. Residue Ser-422 is modified to Phosphoserine. Residue Lys-483 is modified to N6-acetyllysine. Ser-537 carries the post-translational modification Phosphoserine. The residue at position 620 (Lys-620) is an N6-acetyllysine.

Belongs to the annexin family. Phosphorylated in response to growth factor stimulation.

Its subcellular location is the cytoplasm. It is found in the melanosome. In terms of biological role, may associate with CD21. May regulate the release of Ca(2+) from intracellular stores. The protein is Annexin A6 (ANXA6) of Bos taurus (Bovine).